Consider the following 143-residue polypeptide: Large ribosomal subunit protein uL11 (143 aa).

The protein belongs to the universal ribosomal protein uL11 family. Part of the ribosomal stalk of the 50S ribosomal subunit. Interacts with L10 and the large rRNA to form the base of the stalk. L10 forms an elongated spine to which L12 dimers bind in a sequential fashion forming a multimeric L10(L12)X complex. Post-translationally, one or more lysine residues are methylated.

In terms of biological role, forms part of the ribosomal stalk which helps the ribosome interact with GTP-bound translation factors. In Zymomonas mobilis subsp. mobilis (strain ATCC 31821 / ZM4 / CP4), this protein is Large ribosomal subunit protein uL11.